Reading from the N-terminus, the 337-residue chain is Protein-arginine kinase (337 aa).

The Phosphagen kinase C-terminal domain maps to I12–Q240. Residues A15 to K19, R162 to F166, and K193 to S198 each bind ATP.

This sequence belongs to the ATP:guanido phosphotransferase family.

The catalysed reaction is L-arginyl-[protein] + ATP = N(omega)-phospho-L-arginyl-[protein] + ADP + H(+). Functionally, catalyzes the specific phosphorylation of arginine residues in proteins. The chain is Protein-arginine kinase from Clostridium perfringens (strain ATCC 13124 / DSM 756 / JCM 1290 / NCIMB 6125 / NCTC 8237 / Type A).